Consider the following 142-residue polypeptide: Hemoglobin subunit alpha (142 aa).

A Globin domain is found at 2–142 (VLSDADKTHV…VATVLTSKYR (141 aa)). At Ser4 the chain carries Phosphoserine. Residue Lys8 is modified to N6-succinyllysine. Position 9 is a phosphothreonine (Thr9). An N6-succinyllysine modification is found at Lys12. Lys17 carries the N6-acetyllysine; alternate modification. Lys17 carries the post-translational modification N6-succinyllysine; alternate. The residue at position 25 (Tyr25) is a Phosphotyrosine. Ser36 is modified (phosphoserine). Lys41 carries the post-translational modification N6-succinyllysine. The residue at position 50 (Ser50) is a Phosphoserine. Residue His59 participates in O2 binding. Heme b is bound at residue His88. Ser103 carries the phosphoserine modification. Phosphothreonine is present on Thr109. Phosphoserine is present on residues Ser125 and Ser132. Residues Thr135 and Thr138 each carry the phosphothreonine modification. Phosphoserine is present on Ser139.

Belongs to the globin family. In terms of assembly, heterotetramer of two alpha chains and two beta chains. As to expression, red blood cells.

Functionally, involved in oxygen transport from the lung to the various peripheral tissues. Its function is as follows. Hemopressin acts as an antagonist peptide of the cannabinoid receptor CNR1. Hemopressin-binding efficiently blocks cannabinoid receptor CNR1 and subsequent signaling. This Dasyurus viverrinus (Eastern quoll) protein is Hemoglobin subunit alpha (HBA).